A 271-amino-acid polypeptide reads, in one-letter code: Zinc finger CCHC domain-containing protein 9 (271 aa).

A disordered region spans residues 1 to 40 (MTRWARVSTTYNKRPLPATSWEDMKKGSFEGTSQNLPKRK). A Phosphoserine modification is found at S48. CCHC-type zinc fingers lie at residues 128-145 (MVCF…DCPA), 155-172 (GICY…KCKA), 184-201 (AKCF…SCPD), and 211-228 (GGCK…DCPE).

It localises to the nucleus. It is found in the nucleolus. Functionally, may down-regulate transcription mediated by NF-kappa-B and the serum response element. In Homo sapiens (Human), this protein is Zinc finger CCHC domain-containing protein 9 (ZCCHC9).